Here is a 273-residue protein sequence, read N- to C-terminus: Ribosomal RNA small subunit methyltransferase A (273 aa).

Asparagine 18, leucine 20, glycine 45, glutamate 66, aspartate 91, and asparagine 113 together coordinate S-adenosyl-L-methionine.

Belongs to the class I-like SAM-binding methyltransferase superfamily. rRNA adenine N(6)-methyltransferase family. RsmA subfamily.

The protein localises to the cytoplasm. It carries out the reaction adenosine(1518)/adenosine(1519) in 16S rRNA + 4 S-adenosyl-L-methionine = N(6)-dimethyladenosine(1518)/N(6)-dimethyladenosine(1519) in 16S rRNA + 4 S-adenosyl-L-homocysteine + 4 H(+). In terms of biological role, specifically dimethylates two adjacent adenosines (A1518 and A1519) in the loop of a conserved hairpin near the 3'-end of 16S rRNA in the 30S particle. May play a critical role in biogenesis of 30S subunits. This Klebsiella pneumoniae (strain 342) protein is Ribosomal RNA small subunit methyltransferase A.